The chain runs to 387 residues: MLRSFSHFLQIGSRRQPTYFRCFHKTTVHLNSFKNDPKKELNSNLNEKSVEESSKNETKEQFNSSSIPRESESEGKTASNTSPLSPKKVENLSKLFNDINEDVSIEELKSRFKDHLPFYENYIRNHPLAIEALQKSTAPRQTGLKLNYVSKLDKYVTPLDGYSHLGSEESNGEIPDKWEDFKDDLTFEISSKFSPFDFGDAGKSTSDAEFLSDISGIPKSDLRALMFVPLVRRRVVNQTRKGKIASMYVLTVVGNRNGVAGFGEGKAESYSLAYKQSCGRAVKNMVYIPRYDKRTVYGVIHKKFHAVRLTLRSRPAGFGLRCNPILHEICRCAGIKDISGEILGSKNGMNTVKAMFEALQSQRLPEDIAMERGQKFVDVQREYYKQT.

A mitochondrion-targeting transit peptide spans Met1 to Cys22. The tract at residues Phe33–Lys87 is disordered. Basic and acidic residues predominate over residues Lys48–Glu60. Ser85 bears the Phosphoserine mark. The region spanning Leu225 to Ile288 is the S5 DRBM domain.

The protein belongs to the universal ribosomal protein uS5 family. As to quaternary structure, component of the mitochondrial small ribosomal subunit (mt-SSU). Mature yeast 74S mitochondrial ribosomes consist of a small (37S) and a large (54S) subunit. The 37S small subunit contains a 15S ribosomal RNA (15S mt-rRNA) and at least 32 different proteins. The 54S large subunit contains a 21S rRNA (21S mt-rRNA) and at least 45 different proteins. uS3m, uS4m and uS5m form the narrow entry site of the mRNA channel.

The protein resides in the mitochondrion. Its function is as follows. Component of the mitochondrial ribosome (mitoribosome), a dedicated translation machinery responsible for the synthesis of mitochondrial genome-encoded proteins, including at least some of the essential transmembrane subunits of the mitochondrial respiratory chain. The mitoribosomes are attached to the mitochondrial inner membrane and translation products are cotranslationally integrated into the membrane. This Schizosaccharomyces pombe (strain 972 / ATCC 24843) (Fission yeast) protein is Small ribosomal subunit protein uS5m (mrp5).